A 184-amino-acid chain; its full sequence is Urease accessory protein UreE (184 aa).

Residues 147 to 184 (EHHGHSHSHSHSHDHDHDHDHDHQHGPSCSHGHHHGHR) form a disordered region. Residues 157 to 171 (HSHDHDHDHDHDHQH) are compositionally biased toward basic and acidic residues.

Belongs to the UreE family.

It is found in the cytoplasm. Its function is as follows. Involved in urease metallocenter assembly. Binds nickel. Probably functions as a nickel donor during metallocenter assembly. The polypeptide is Urease accessory protein UreE (Burkholderia mallei (strain ATCC 23344)).